A 450-amino-acid polypeptide reads, in one-letter code: Guanine deaminase (450 aa).

2 residues coordinate Zn(2+): H88 and H90. Substrate contacts are provided by residues 90-93, 218-219, 245-248, and D335; these read HAPQ, RF, and HLSE. 2 residues coordinate Zn(2+): H245 and D335.

It belongs to the metallo-dependent hydrolases superfamily. ATZ/TRZ family. It depends on Zn(2+) as a cofactor.

The catalysed reaction is guanine + H2O + H(+) = xanthine + NH4(+). Its pathway is purine metabolism; guanine degradation; xanthine from guanine: step 1/1. Its function is as follows. Catalyzes the hydrolytic deamination of guanine, producing xanthine and ammonia. In Dictyostelium discoideum (Social amoeba), this protein is Guanine deaminase (guaD).